A 448-amino-acid polypeptide reads, in one-letter code: tRNA modification GTPase MnmE (448 aa).

3 residues coordinate (6S)-5-formyl-5,6,7,8-tetrahydrofolate: Arg22, Glu79, and Lys118. Positions 214 to 371 constitute a TrmE-type G domain; the sequence is GLHVVLAGQP…LRQELLRIAG (158 aa). Asn224 lines the K(+) pocket. GTP contacts are provided by residues 224 to 229, 243 to 249, and 268 to 271; these read NVGKSS, TPIAGTT, and DTAG. Mg(2+) is bound at residue Ser228. Positions 243, 245, and 248 each coordinate K(+). Thr249 is a Mg(2+) binding site. Lys448 is a (6S)-5-formyl-5,6,7,8-tetrahydrofolate binding site.

It belongs to the TRAFAC class TrmE-Era-EngA-EngB-Septin-like GTPase superfamily. TrmE GTPase family. Homodimer. Heterotetramer of two MnmE and two MnmG subunits. K(+) is required as a cofactor.

Its subcellular location is the cytoplasm. In terms of biological role, exhibits a very high intrinsic GTPase hydrolysis rate. Involved in the addition of a carboxymethylaminomethyl (cmnm) group at the wobble position (U34) of certain tRNAs, forming tRNA-cmnm(5)s(2)U34. This is tRNA modification GTPase MnmE from Dechloromonas aromatica (strain RCB).